A 457-amino-acid polypeptide reads, in one-letter code: Argininosuccinate lyase (457 aa).

This sequence belongs to the lyase 1 family. Argininosuccinate lyase subfamily.

Its subcellular location is the cytoplasm. The enzyme catalyses 2-(N(omega)-L-arginino)succinate = fumarate + L-arginine. The protein operates within amino-acid biosynthesis; L-arginine biosynthesis; L-arginine from L-ornithine and carbamoyl phosphate: step 3/3. The sequence is that of Argininosuccinate lyase from Shigella flexneri serotype 5b (strain 8401).